The sequence spans 189 residues: Segregation and condensation protein B (189 aa).

The protein belongs to the ScpB family. Homodimer. Homodimerization may be required to stabilize the binding of ScpA to the Smc head domains. Component of a cohesin-like complex composed of ScpA, ScpB and the Smc homodimer, in which ScpA and ScpB bind to the head domain of Smc. The presence of the three proteins is required for the association of the complex with DNA.

It is found in the cytoplasm. Participates in chromosomal partition during cell division. May act via the formation of a condensin-like complex containing Smc and ScpA that pull DNA away from mid-cell into both cell halves. In Streptococcus pneumoniae serotype 19F (strain G54), this protein is Segregation and condensation protein B.